A 228-amino-acid chain; its full sequence is Cell surface Cu-only superoxide dismutase 5 (228 aa).

A signal peptide spans Met-1–Ala-15. Asn-53 is a glycosylation site (N-linked (GlcNAc...) asparagine). Residues His-75 and His-77 each contribute to the Cu cation site. Asn-86 carries an N-linked (GlcNAc...) asparagine glycan. Cys-87 and Cys-162 are oxidised to a cystine. Cu cation is bound at residue His-93. A glycan (N-linked (GlcNAc...) asparagine) is linked at Asn-98. Residue His-153 coordinates Cu cation. 5 N-linked (GlcNAc...) asparagine glycosylation sites follow: Asn-156, Asn-164, Asn-176, Asn-181, and Asn-192. Residues Asn-176–Ala-201 are compositionally biased toward low complexity. Residues Asn-176 to Gly-204 are disordered. A lipid anchor (GPI-anchor amidated asparagine) is attached at Asn-205. Positions Gly-206–Ile-228 are cleaved as a propeptide — removed in mature form.

The protein belongs to the Cu-Zn superoxide dismutase family. As to quaternary structure, monomer. Cu cation serves as cofactor. Post-translationally, the GPI-anchor is attached to the protein in the endoplasmic reticulum and serves to target the protein to the cell surface. There, the glucosamine-inositol phospholipid moiety is cleaved off and the GPI-modified mannoprotein is covalently attached via its lipidless GPI glycan remnant to the 1,6-beta-glucan of the outer cell wall layer.

Its subcellular location is the secreted. It is found in the cell wall. The protein localises to the membrane. The catalysed reaction is 2 superoxide + 2 H(+) = H2O2 + O2. Secreted in a disulfide-oxidized form and apo-pools of secreted SOD5 can readily capture extracellular copper for rapid induction of enzyme activity. Its function is as follows. Superoxide dismutases serve to convert damaging superoxide radicals, a key form of ROS, to less damaging hydrogen peroxide that can be converted into water by catalase action. Degrades host-derived reactive oxygen species to escape innate immune surveillance. Involved in the occurrence of miconazole-tolerant persisters in biofilms. Persisters are cells that survive high doses of an antimicrobial agent. The unusual attributes of SOD5-like fungal proteins, including the absence of zinc and an open active site that readily captures extracellular copper, make these SODs well suited to meet challenges in zinc and copper availability at the host-pathogen interface. This Candida albicans (strain SC5314 / ATCC MYA-2876) (Yeast) protein is Cell surface Cu-only superoxide dismutase 5 (SOD5).